The primary structure comprises 184 residues: ATP synthase subunit delta (184 aa).

Belongs to the ATPase delta chain family. F-type ATPases have 2 components, F(1) - the catalytic core - and F(0) - the membrane proton channel. F(1) has five subunits: alpha(3), beta(3), gamma(1), delta(1), epsilon(1). F(0) has three main subunits: a(1), b(2) and c(10-14). The alpha and beta chains form an alternating ring which encloses part of the gamma chain. F(1) is attached to F(0) by a central stalk formed by the gamma and epsilon chains, while a peripheral stalk is formed by the delta and b chains.

The protein localises to the cell inner membrane. Its function is as follows. F(1)F(0) ATP synthase produces ATP from ADP in the presence of a proton or sodium gradient. F-type ATPases consist of two structural domains, F(1) containing the extramembraneous catalytic core and F(0) containing the membrane proton channel, linked together by a central stalk and a peripheral stalk. During catalysis, ATP synthesis in the catalytic domain of F(1) is coupled via a rotary mechanism of the central stalk subunits to proton translocation. Functionally, this protein is part of the stalk that links CF(0) to CF(1). It either transmits conformational changes from CF(0) to CF(1) or is implicated in proton conduction. The chain is ATP synthase subunit delta from Paramagnetospirillum magneticum (strain ATCC 700264 / AMB-1) (Magnetospirillum magneticum).